A 397-amino-acid chain; its full sequence is Acetate kinase (397 aa).

Position 8 (N8) interacts with Mg(2+). K15 provides a ligand contact to ATP. R89 is a substrate binding site. D146 functions as the Proton donor/acceptor in the catalytic mechanism. ATP is bound by residues 206–210, 281–283, and 329–333; these read HLGNG, DLR, and GVGEN. E382 lines the Mg(2+) pocket.

It belongs to the acetokinase family. Homodimer. Requires Mg(2+) as cofactor. Mn(2+) serves as cofactor.

It is found in the cytoplasm. The catalysed reaction is acetate + ATP = acetyl phosphate + ADP. The protein operates within metabolic intermediate biosynthesis; acetyl-CoA biosynthesis; acetyl-CoA from acetate: step 1/2. Catalyzes the formation of acetyl phosphate from acetate and ATP. Can also catalyze the reverse reaction. The protein is Acetate kinase of Bacillus thuringiensis subsp. konkukian (strain 97-27).